Reading from the N-terminus, the 119-residue chain is NADH-ubiquinone oxidoreductase chain 3 (119 aa).

3 helical membrane-spanning segments follow: residues Ile8–Leu28, Leu63–Val83, and Ile88–Leu108.

The protein belongs to the complex I subunit 3 family.

The protein localises to the mitochondrion membrane. It carries out the reaction a ubiquinone + NADH + 5 H(+)(in) = a ubiquinol + NAD(+) + 4 H(+)(out). In terms of biological role, core subunit of the mitochondrial membrane respiratory chain NADH dehydrogenase (Complex I) that is believed to belong to the minimal assembly required for catalysis. Complex I functions in the transfer of electrons from NADH to the respiratory chain. The immediate electron acceptor for the enzyme is believed to be ubiquinone. The protein is NADH-ubiquinone oxidoreductase chain 3 (ND3) of Brassica napus (Rape).